The chain runs to 213 residues: Peroxynitrite isomerase (213 aa).

Residues Met-1–Ala-10 are compositionally biased toward low complexity. The tract at residues Met-1–Ala-26 is disordered. Positions Gly-51–Gly-57 match the GXWXGXG motif. His-203 contacts heme b.

Belongs to the nitrobindin family. As to quaternary structure, homodimer. Heme b is required as a cofactor.

The enzyme catalyses peroxynitrite = nitrate. Its pathway is nitrogen metabolism. In terms of biological role, heme-binding protein able to scavenge peroxynitrite and to protect free L-tyrosine against peroxynitrite-mediated nitration, by acting as a peroxynitrite isomerase that converts peroxynitrite to nitrate. Therefore, this protein likely plays a role in peroxynitrite sensing and in the detoxification of reactive nitrogen and oxygen species (RNS and ROS, respectively). Is able to bind nitric oxide (NO) in vitro, but may act as a sensor of peroxynitrite levels in vivo. The chain is Peroxynitrite isomerase from Parafrankia sp. (strain EAN1pec).